We begin with the raw amino-acid sequence, 212 residues long: 3-demethoxyubiquinol 3-hydroxylase (212 aa).

Residues Glu61, Glu91, His94, Glu143, Glu175, and His178 each contribute to the Fe cation site.

This sequence belongs to the COQ7 family. It depends on Fe cation as a cofactor.

It is found in the cell membrane. The enzyme catalyses a 5-methoxy-2-methyl-3-(all-trans-polyprenyl)benzene-1,4-diol + AH2 + O2 = a 3-demethylubiquinol + A + H2O. It functions in the pathway cofactor biosynthesis; ubiquinone biosynthesis. Catalyzes the hydroxylation of 2-nonaprenyl-3-methyl-6-methoxy-1,4-benzoquinol during ubiquinone biosynthesis. The polypeptide is 3-demethoxyubiquinol 3-hydroxylase (Paraburkholderia phytofirmans (strain DSM 17436 / LMG 22146 / PsJN) (Burkholderia phytofirmans)).